The sequence spans 265 residues: Palmitoyltransferase ZDHHC21 (265 aa).

Residues 1–16 (MGLRIHFVVDPHGWCC) are Cytoplasmic-facing. Residues 17 to 37 (MGLIVFVWLYNIVIIPKIVLF) form a helical membrane-spanning segment. The Extracellular portion of the chain corresponds to 38–44 (PHYEEGH). The chain crosses the membrane as a helical span at residues 45-65 (IPGILIIIFYGISIFCLVALV). Residues 66–133 (RASLTDPGRL…NNCVGEDNHW (68 aa)) lie on the Cytoplasmic side of the membrane. One can recognise a DHHC domain in the interval 90–140 (ELCNKCNLMRPKRSHHCSRCGHCVRRMDHHCPWINNCVGEDNHWLFLQLCF). Cysteine 120 (S-palmitoyl cysteine intermediate) is an active-site residue. The helical transmembrane segment at 134–154 (LFLQLCFYTELLTCYALMFSF) threads the bilayer. The Extracellular portion of the chain corresponds to 155 to 185 (CHYYYFLPLKKRNLDLFVVRHELAIMRLAAF). A helical membrane pass occupies residues 186 to 206 (MGITMLVGITGLFYTQLIGII). At 207–265 (TDTTSIEKMSNCCEEISRPRKPWQQTFSEVFGTRWKILWFIPFRQRQPLRVPYHFANHV) the chain is on the cytoplasmic side.

It belongs to the DHHC palmitoyltransferase family. Widely expressed. Expressed in Henle's layer within the hair bulb and the hair shaft cuticle (at protein level). Expression is limited to the post-mitotic lineages of inner root sheath (IRS) and cuticle.

The protein resides in the golgi apparatus membrane. Its subcellular location is the golgi apparatus. The protein localises to the cis-Golgi network membrane. It localises to the cell membrane. The catalysed reaction is L-cysteinyl-[protein] + hexadecanoyl-CoA = S-hexadecanoyl-L-cysteinyl-[protein] + CoA. Palmitoyltransferase that catalyzes the addition of palmitate onto various protein substrates. Palmitoylates sex steroid hormone receptors, including ESR1, PGR and AR, thereby regulating their targeting to the plasma membrane. This affects rapid intracellular signaling by sex hormones via ERK and AKT kinases and the generation of cAMP, but does not affect that mediated by their nuclear receptor. Palmitoylates FYN, regulates its localization in hair follicles and plays a key role in epidermal homeostasis and hair follicle differentiation. Through the palmitoylation of PLCB1 and the regulation of PLCB1 downstream signaling may indirectly regulate the function of the endothelial barrier and the adhesion of leukocytes to the endothelium. Also has a palmitoyltransferase activity toward ADRA1D, positively regulating its activity and expression and may thereby play a role in vascular contraction. May also palmitoylate eNOS and LCK. The sequence is that of Palmitoyltransferase ZDHHC21 from Mus musculus (Mouse).